We begin with the raw amino-acid sequence, 457 residues long: Argininosuccinate lyase (457 aa).

Belongs to the lyase 1 family. Argininosuccinate lyase subfamily.

Its subcellular location is the cytoplasm. It carries out the reaction 2-(N(omega)-L-arginino)succinate = fumarate + L-arginine. The protein operates within amino-acid biosynthesis; L-arginine biosynthesis; L-arginine from L-ornithine and carbamoyl phosphate: step 3/3. The sequence is that of Argininosuccinate lyase from Cronobacter sakazakii (strain ATCC BAA-894) (Enterobacter sakazakii).